Here is a 758-residue protein sequence, read N- to C-terminus: MGRIQIVYSPDENVSGRTNRPGKEVVDPRTGRIIKVKRETPDDYLNVLKPIKGPKRMEFNPYLPKTLTPKGYAKFKLMMNVASKQYETLVKRLKTERTLWEDPDFPANDKAIGNLPDFRERIEWKRPHEINPNAKFFAGGASRFDIEQGALGDCWLLAVVASISGYPQLFDQVVPKDQELKGPEYVGVVRFRFWRFGHWVEVLIDDRLPVRQGRNTLVFMHSNDPTEFWSALLEKAYAKLNGCYAHLSGGSQSEAMEDLTGGICLSLELNQKERPSDLIDQLKIYAQRCCLMGCSIDSSVMEQKMDNGLIGSHAYSLTGVYPVNYRGRTQWLMRLRNPWGDSHEWKGAWCDGSPQWREISEQEKKNINLSFTADGEFWMSYEDFVTCFSRVEVCHLGLESLEYNQNFHGKRRLDEAIFSGQWQRNVNAGGCINNRTTYWTSPQFRITVEDPDPDDDDNKCSVLIGLMQTDIRKKVGADFQPIGFMVYNAPDDLNTLLSRAQLLTRSPIAKSQFINTREVTAQFRVPPGSYVVIPSTFDPNIEVNFILRVFSQTSITEQELDEDNTNQGLPDDVIEALKLEDTLLDEDQEIEQKFLAIRDPKTNAINAVKLGELLNNSTLQDIPNFQGFNKELCRSMVASVDNNLTGHVELNEFMDLWIQAKGWKHIFIKHDVDQSGYFSAYEFREALNDAGYHVSNRLINAIINRYQDPGTDKISFEDFMLCMVRLKTAFETIEAHPKNIEGTSLFSAEDYLRFSVYI.

The 299-residue stretch at 99–397 (LWEDPDFPAN…FSRVEVCHLG (299 aa)) folds into the Calpain catalytic domain. Catalysis depends on residues C154, H313, and N337. Residues 398 to 562 (LESLEYNQNF…TSITEQELDE (165 aa)) are domain III. A linker region spans residues 563 to 582 (DNTNQGLPDDVIEALKLEDT). The tract at residues 583-757 (LLDEDQEIEQ…AEDYLRFSVY (175 aa)) is domain IV. The Ca(2+) site is built by D641, N643, T645, H647, E652, D671, D673, S675, Y677, and E682. 2 consecutive EF-hand domains span residues 658 to 693 (IQAKGWKHIFIKHDVDQSGYFSAYEFREALNDAGYH) and 694 to 729 (VSNRLINAIINRYQDPGTDKISFEDFMLCMVRLKTA).

This sequence belongs to the peptidase C2 family.

Activated by free cytoplasmic calcium. In terms of biological role, calpains are calcium-activated non-lysosomal thiol-proteases. The sequence is that of Calpain from Schistosoma mansoni (Blood fluke).